Reading from the N-terminus, the 283-residue chain is Undecaprenyl-diphosphatase (283 aa).

8 helical membrane-spanning segments follow: residues 4 to 24, 45 to 65, 91 to 111, 118 to 138, 153 to 173, 194 to 214, 228 to 248, and 258 to 278; these read LLILKAVIMGIVEGITEFLPI, ADLFIVVIQLGAILAVIYEYW, QLGLSLIVATIPVMLVGFTLA, LFNPYTVAIMLILGGLLIFYV, VSLKTALLIGLMQCLALIPGT, AEFSFFLGIPVIIGAGLLDLL, ILGVGVLVSFVVGLLCIRWLV, and IFAWLRIITGIIVLLVAWIFG.

It belongs to the UppP family.

The protein localises to the cell inner membrane. The enzyme catalyses di-trans,octa-cis-undecaprenyl diphosphate + H2O = di-trans,octa-cis-undecaprenyl phosphate + phosphate + H(+). In terms of biological role, catalyzes the dephosphorylation of undecaprenyl diphosphate (UPP). Confers resistance to bacitracin. The sequence is that of Undecaprenyl-diphosphatase from Psychrobacter sp. (strain PRwf-1).